We begin with the raw amino-acid sequence, 27 residues long: Vasotocin-neurophysin VT (27 aa).

Cys-1 and Cys-6 are disulfide-bonded. Gly-9 is modified (glycine amide).

It belongs to the vasopressin/oxytocin family.

Vasotocin is an antidiuretic hormone. The sequence is that of Vasotocin-neurophysin VT from Sclerophrys regularis (Common African toad).